We begin with the raw amino-acid sequence, 50 residues long: Protein PsbN (50 aa).

A helical membrane pass occupies residues 14 to 34; it reads VAVTILAVLLALTGFGLWTAF.

Belongs to the PsbN family.

The protein localises to the cellular thylakoid membrane. Its function is as follows. May play a role in photosystem I and II biogenesis. This chain is Protein PsbN, found in Prochlorococcus marinus (strain MIT 9515).